A 377-amino-acid polypeptide reads, in one-letter code: DNA replication and repair protein RecF (377 aa).

An ATP-binding site is contributed by 30-37 (GNNGSGKS).

This sequence belongs to the RecF family.

It localises to the cytoplasm. Functionally, the RecF protein is involved in DNA metabolism; it is required for DNA replication and normal SOS inducibility. RecF binds preferentially to single-stranded, linear DNA. It also seems to bind ATP. This chain is DNA replication and repair protein RecF, found in Colwellia psychrerythraea (strain 34H / ATCC BAA-681) (Vibrio psychroerythus).